The chain runs to 342 residues: Pre-mRNA-splicing factor 18 (342 aa).

N-acetylmethionine is present on M1.

Belongs to the PRP18 family. In terms of assembly, heterodimer with PPIH. Interacts with PRPF4 and with the spliceosome. Part of a complex containing U4/U6 snRNPs.

Its subcellular location is the nucleus speckle. Participates in the second step of pre-mRNA splicing. This is Pre-mRNA-splicing factor 18 (PRPF18) from Pongo abelii (Sumatran orangutan).